The chain runs to 276 residues: Bis(5'-nucleosyl)-tetraphosphatase, symmetrical (276 aa).

The protein belongs to the Ap4A hydrolase family.

It carries out the reaction P(1),P(4)-bis(5'-adenosyl) tetraphosphate + H2O = 2 ADP + 2 H(+). In terms of biological role, hydrolyzes diadenosine 5',5'''-P1,P4-tetraphosphate to yield ADP. This is Bis(5'-nucleosyl)-tetraphosphatase, symmetrical from Legionella pneumophila subsp. pneumophila (strain Philadelphia 1 / ATCC 33152 / DSM 7513).